We begin with the raw amino-acid sequence, 450 residues long: Phosphoglucosamine mutase (450 aa).

The active-site Phosphoserine intermediate is S101. 4 residues coordinate Mg(2+): S101, D242, D244, and D246. Position 101 is a phosphoserine (S101).

The protein belongs to the phosphohexose mutase family. The cofactor is Mg(2+). Activated by phosphorylation.

It carries out the reaction alpha-D-glucosamine 1-phosphate = D-glucosamine 6-phosphate. In terms of biological role, catalyzes the conversion of glucosamine-6-phosphate to glucosamine-1-phosphate. The polypeptide is Phosphoglucosamine mutase (Rhodopseudomonas palustris (strain ATCC BAA-98 / CGA009)).